The sequence spans 486 residues: Vicilin-like seed storage protein At3g22640 (486 aa).

The first 22 residues, 1–22 (MAITNKLIITLLLLISIAVVHC), serve as a signal peptide directing secretion. Residues 34–60 (PPQQGEQEGPRRRPGGGSGEGWEEEST) form a disordered region. Cupin type-1 domains lie at 64-223 (YHFR…ELLG) and 278-448 (FNLF…KVAE). Asn168, Asn316, and Asn455 each carry an N-linked (GlcNAc...) asparagine glycan.

It belongs to the 7S seed storage protein family. Predominantly expressed in the embryo and endosperm of developing seeds. Also present in seedlings.

Its function is as follows. Seed storage protein. In terms of biological role, (Microbial infection) Involved in tobacco mosaic virus (TMV) replication. Required for endoplasmic reticulum (ER) aggregations mediated by TMV main replicase (P126) upon viral infection. The polypeptide is Vicilin-like seed storage protein At3g22640 (Arabidopsis thaliana (Mouse-ear cress)).